The sequence spans 229 residues: Non-structural protein P8 (229 aa).

Transmembrane regions (helical) follow at residues 119 to 139 (IIHM…VCTL) and 162 to 182 (SLNP…MVCA).

It belongs to the orbivirus NS3 family. In terms of assembly, forms homooligomers via coiled-coil motif. Interacts with host OPTN; this interaction inhibits innate immune response.

It localises to the host cell membrane. The protein resides in the host Golgi apparatus. In terms of biological role, plays a role in the inhibition of host innate immune response. Interacts with host OPTN and thus inhibits the recruitment of TBK1 to the host Golgi apparatus. In turn, downstream partner IRF3 cannot be activated and IFN-beta production is impaired. Facilitates viral particle release either by increasing plasma membrane permeability through a viroporin-like activity or by viral budding. The protein is Non-structural protein P8 (Segment-10) of Bluetongue virus 1 (isolate Australia) (BTV 1).